We begin with the raw amino-acid sequence, 133 residues long: ATP synthase epsilon chain, chloroplastic (133 aa).

It belongs to the ATPase epsilon chain family. As to quaternary structure, F-type ATPases have 2 components, CF(1) - the catalytic core - and CF(0) - the membrane proton channel. CF(1) has five subunits: alpha(3), beta(3), gamma(1), delta(1), epsilon(1). CF(0) has three main subunits: a, b and c.

It is found in the plastid. The protein localises to the chloroplast thylakoid membrane. In terms of biological role, produces ATP from ADP in the presence of a proton gradient across the membrane. The protein is ATP synthase epsilon chain, chloroplastic of Citrus sinensis (Sweet orange).